The chain runs to 217 residues: Probable transaldolase (217 aa).

Catalysis depends on Lys83, which acts as the Schiff-base intermediate with substrate.

It belongs to the transaldolase family. Type 3B subfamily.

The protein resides in the cytoplasm. The enzyme catalyses D-sedoheptulose 7-phosphate + D-glyceraldehyde 3-phosphate = D-erythrose 4-phosphate + beta-D-fructose 6-phosphate. It participates in carbohydrate degradation; pentose phosphate pathway; D-glyceraldehyde 3-phosphate and beta-D-fructose 6-phosphate from D-ribose 5-phosphate and D-xylulose 5-phosphate (non-oxidative stage): step 2/3. In terms of biological role, transaldolase is important for the balance of metabolites in the pentose-phosphate pathway. In Anaeromyxobacter sp. (strain K), this protein is Probable transaldolase.